The sequence spans 320 residues: ATP-dependent 6-phosphofructokinase (320 aa).

Residue G12 coordinates ATP. 22–26 is a binding site for ADP; sequence RGVVR. Residues 73–74 and 103–106 each bind ATP; these read RF and GDGS. D104 contributes to the Mg(2+) binding site. Residue 126–128 coordinates substrate; the sequence is TID. D128 acts as the Proton acceptor in catalysis. ADP is bound at residue R155. Substrate contacts are provided by residues R163 and 170-172; that span reads MGR. ADP contacts are provided by residues 186–188, K212, and 214–216; these read GCE and KKH. Substrate is bound by residues E223, R244, and 250 to 253; that span reads HIQR.

Belongs to the phosphofructokinase type A (PFKA) family. ATP-dependent PFK group I subfamily. Prokaryotic clade 'B1' sub-subfamily. As to quaternary structure, homotetramer. Mg(2+) is required as a cofactor.

Its subcellular location is the cytoplasm. It carries out the reaction beta-D-fructose 6-phosphate + ATP = beta-D-fructose 1,6-bisphosphate + ADP + H(+). The protein operates within carbohydrate degradation; glycolysis; D-glyceraldehyde 3-phosphate and glycerone phosphate from D-glucose: step 3/4. Its activity is regulated as follows. Allosterically activated by ADP and other diphosphonucleosides, and allosterically inhibited by phosphoenolpyruvate. Its function is as follows. Catalyzes the phosphorylation of D-fructose 6-phosphate to fructose 1,6-bisphosphate by ATP, the first committing step of glycolysis. This chain is ATP-dependent 6-phosphofructokinase, found in Blochmanniella floridana.